The primary structure comprises 67 residues: Transcription elongation factor Spt4 (67 aa).

Zn(2+) contacts are provided by Cys7, Cys10, Cys19, and Cys22.

The protein belongs to the archaeal Spt4 family. In terms of assembly, heterodimer composed of Spt4 and Spt5. Interacts with RNA polymerase (RNAP). The complex interacts with FttA.

The protein localises to the chromosome. The Stp4-Spt5 complex stimulates transcription elongation on both naked DNA and histone-bound DNA (chromatin), facilitating transcription through the histone barrier. Neither protein functions alone. The complex also stimulates the transcription termination activity of FttA, neither protein alone stimulates FttA-dependent termination. This chain is Transcription elongation factor Spt4, found in Thermococcus kodakarensis (strain ATCC BAA-918 / JCM 12380 / KOD1) (Pyrococcus kodakaraensis (strain KOD1)).